A 281-amino-acid chain; its full sequence is UPF0750 membrane protein YvjA (281 aa).

5 consecutive transmembrane segments (helical) span residues 14–34, 56–76, 77–97, 108–128, and 149–169; these read YVYILIGAAITAVSFNVFLLP, AAYVQWIINIPLFIAGVILLG, GKFGLKTLAGSVFLPLVVFLT, LLAAIFGGVGIGIGIGIVYLG, and SLGKCLAIIDGMIVVTAMIVF.

This sequence belongs to the UPF0750 family.

The protein localises to the cell membrane. This is UPF0750 membrane protein YvjA (yvjA) from Bacillus subtilis (strain 168).